The chain runs to 156 residues: ATP synthase subunit b (156 aa).

A helical transmembrane segment spans residues 7-27; it reads IFFQMLVFFVLGWFTMKFVWP.

The protein belongs to the ATPase B chain family. In terms of assembly, F-type ATPases have 2 components, F(1) - the catalytic core - and F(0) - the membrane proton channel. F(1) has five subunits: alpha(3), beta(3), gamma(1), delta(1), epsilon(1). F(0) has three main subunits: a(1), b(2) and c(10-14). The alpha and beta chains form an alternating ring which encloses part of the gamma chain. F(1) is attached to F(0) by a central stalk formed by the gamma and epsilon chains, while a peripheral stalk is formed by the delta and b chains.

The protein resides in the cell inner membrane. F(1)F(0) ATP synthase produces ATP from ADP in the presence of a proton or sodium gradient. F-type ATPases consist of two structural domains, F(1) containing the extramembraneous catalytic core and F(0) containing the membrane proton channel, linked together by a central stalk and a peripheral stalk. During catalysis, ATP synthesis in the catalytic domain of F(1) is coupled via a rotary mechanism of the central stalk subunits to proton translocation. Functionally, component of the F(0) channel, it forms part of the peripheral stalk, linking F(1) to F(0). This Bordetella petrii (strain ATCC BAA-461 / DSM 12804 / CCUG 43448) protein is ATP synthase subunit b.